A 280-amino-acid chain; its full sequence is 3-methyl-2-oxobutanoate hydroxymethyltransferase (280 aa).

Mg(2+) is bound by residues Asp-61 and Asp-100. 3-methyl-2-oxobutanoate-binding positions include 61-62, Asp-100, and Lys-130; that span reads DS. Glu-132 is a binding site for Mg(2+). Glu-198 serves as the catalytic Proton acceptor.

This sequence belongs to the PanB family. As to quaternary structure, homodecamer; pentamer of dimers. Mg(2+) is required as a cofactor.

Its subcellular location is the cytoplasm. The enzyme catalyses 3-methyl-2-oxobutanoate + (6R)-5,10-methylene-5,6,7,8-tetrahydrofolate + H2O = 2-dehydropantoate + (6S)-5,6,7,8-tetrahydrofolate. The protein operates within cofactor biosynthesis; (R)-pantothenate biosynthesis; (R)-pantoate from 3-methyl-2-oxobutanoate: step 1/2. Functionally, catalyzes the reversible reaction in which hydroxymethyl group from 5,10-methylenetetrahydrofolate is transferred onto alpha-ketoisovalerate to form ketopantoate. This is 3-methyl-2-oxobutanoate hydroxymethyltransferase from Mycolicibacterium vanbaalenii (strain DSM 7251 / JCM 13017 / BCRC 16820 / KCTC 9966 / NRRL B-24157 / PYR-1) (Mycobacterium vanbaalenii).